We begin with the raw amino-acid sequence, 196 residues long: Pyridoxal 5'-phosphate synthase subunit PdxT (196 aa).

47–49 (GES) is a binding site for L-glutamine. Catalysis depends on Cys-79, which acts as the Nucleophile. L-glutamine-binding positions include Arg-106 and 134–135 (IR). Active-site charge relay system residues include His-170 and Glu-172.

It belongs to the glutaminase PdxT/SNO family. In terms of assembly, in the presence of PdxS, forms a dodecamer of heterodimers. Only shows activity in the heterodimer.

The enzyme catalyses aldehydo-D-ribose 5-phosphate + D-glyceraldehyde 3-phosphate + L-glutamine = pyridoxal 5'-phosphate + L-glutamate + phosphate + 3 H2O + H(+). It catalyses the reaction L-glutamine + H2O = L-glutamate + NH4(+). It functions in the pathway cofactor biosynthesis; pyridoxal 5'-phosphate biosynthesis. In terms of biological role, catalyzes the hydrolysis of glutamine to glutamate and ammonia as part of the biosynthesis of pyridoxal 5'-phosphate. The resulting ammonia molecule is channeled to the active site of PdxS. This chain is Pyridoxal 5'-phosphate synthase subunit PdxT, found in Bacillus subtilis (strain 168).